The sequence spans 421 residues: DNA (cytosine-5)-methyltransferase 3-like (421 aa).

Positions 1–14 (MGSRETPSSCSKTL) are enriched in polar residues. Residues 1-39 (MGSRETPSSCSKTLETLDLETSDSSSPDADSPLEEQWLK) form a disordered region. The ADD domain occupies 75-207 (EVKVNRRSIE…LKAFHDQEGA (133 aa)). The GATA-type; atypical zinc-finger motif lies at 86–116 (ICLCCGTLQVYTRHPLFEGGLCAPCKDKFLE). A PHD-type; atypical zinc finger spans residues 127–183 (QSYCTICCSGGTLFICESPDCTRCYCFECVDILVGPGTSERINAMACWVCFLCLPFS).

Homodimer. Heterotetramer composed of 1 DNMT3A homodimer and 2 DNMT3L subunits (DNMT3L-DNMT3A-DNMT3A-DNMT3L). Interacts with histone H3 (via N-terminus); interaction is strongly inhibited by methylation at lysine 4 (H3K4me). Interacts with EZH2; the interaction is direct. Interacts with SPOCD1. As to expression, expressed in testis, thymus, ovary, and heart.

Its subcellular location is the nucleus. Its function is as follows. Catalytically inactive regulatory factor of DNA methyltransferases that can either promote or inhibit DNA methylation depending on the context. Essential for the function of DNMT3A and DNMT3B: activates DNMT3A and DNMT3B by binding to their catalytic domain. Acts by accelerating the binding of DNA and S-adenosyl-L-methionine (AdoMet) to the methyltransferases and dissociates from the complex after DNA binding to the methyltransferases. Recognizes unmethylated histone H3 lysine 4 (H3K4me0) and induces de novo DNA methylation by recruitment or activation of DNMT3. Plays a key role in embryonic stem cells and germ cells. In germ cells, required for the methylation of imprinted loci together with DNMT3A. In male germ cells, specifically required to methylate retrotransposons, preventing their mobilization. Plays a key role in embryonic stem cells (ESCs) by acting both as an positive and negative regulator of DNA methylation. While it promotes DNA methylation of housekeeping genes together with DNMT3A and DNMT3B, it also acts as an inhibitor of DNA methylation at the promoter of bivalent genes. Interacts with the EZH2 component of the PRC2/EED-EZH2 complex, preventing interaction of DNMT3A and DNMT3B with the PRC2/EED-EZH2 complex, leading to maintain low methylation levels at the promoters of bivalent genes. Promotes differentiation of ESCs into primordial germ cells by inhibiting DNA methylation at the promoter of RHOX5, thereby activating its expression. The sequence is that of DNA (cytosine-5)-methyltransferase 3-like (Dnmt3l) from Mus musculus (Mouse).